Reading from the N-terminus, the 304-residue chain is uncharacterized protein (304 aa).

Transmembrane regions (helical) follow at residues 5 to 25, 42 to 62, 68 to 88, 96 to 116, 120 to 140, 150 to 170, 178 to 198, 215 to 235, 245 to 265, and 268 to 288; these read TIILLLFIIVSITWGTTFIAI, FLLASFFLIFLCFYTKTPLLF, IFQLIICIFYFSLPFLLILYG, IASVIFAIMPIIVLFLSFIFF, LYFFQFIGLVLAIIFLSIILF, TIKGVIALLLAMTSHAIIYLY, ISILTFNALPSLLSGLFFLVI, ILATFYLSYFSGVFGILSYFY, ASTIFFIFPIINLMLEEFVWG, and IGIDQLQLIVFLMSSILITIF. 2 consecutive EamA domains span residues 16 to 140 and 162 to 288; these read ITWG…IILF and TSHA…ITIF.

The protein belongs to the EamA transporter family.

It localises to the cell membrane. This is an uncharacterized protein from Buchnera aphidicola subsp. Schlechtendalia chinensis.